The chain runs to 91 residues: Non-specific lipid-transfer protein 1 (91 aa).

Disulfide bonds link Cys3-Cys50, Cys13-Cys27, Cys28-Cys73, and Cys48-Cys87. A 1,2-diacyl-sn-glycero-3-phosphocholine-binding residues include Arg44 and Tyr79.

Monomer.

In terms of biological role, plant non-specific lipid-transfer proteins transfer phospholipids as well as galactolipids across membranes. May play a role in wax or cutin deposition in the cell walls of expanding epidermal cells and certain secretory tissues. Has antifungal activity against F.solani, F.oxysporum, P.aphanidermatum and S.rolfsii. Has antibacterial activity against the Gram-positive bacterium S.aureus but not against the Gram-negative bacterium S.typhimurium. This Vigna radiata var. radiata (Mung bean) protein is Non-specific lipid-transfer protein 1.